The chain runs to 179 residues: Oryzines biosynthesis cluster protein J (179 aa).

Residues 88–148 (YVDYHPGCEP…NHCWRNPSKT (61 aa)) form the Cupin type-2 domain.

The protein belongs to the oryJ family.

It participates in secondary metabolite biosynthesis. Part of the gene cluster that mediates the biosynthesis of oryzines, natural products with an unusual maleidride backbone. The two subunits of the fungal fatty acid synthase oryfasA and oryfasB probably form octenoic acid. This fatty acid is most likely activated by the acyl-CoA ligase oryP to give octenyl-CoA before the citrate synthase-like protein oryE catalyzes condensation with oxaloacetate to form tricarboxylic acid. The next steps of the pathways are conjectural, but a favorite possible route has been proposed, beginning with decarboxylation and concomitant dehydration by the decarboxylase oryM, followed by tautomerization, which may lead to the production of a diene intermediate. Reduction of this diene intermediate could give the known metabolite piliformic acid. On the pathway to oryzine B and oryzine A, however, hydroxylation of the diene by the alpha-ketoglutarate-dependent dioxygenase oryG and lactonisation by the lactonohydrolases oryH or oryL could give oryzine B directly. Finally, enoyl reduction by the dehydrogenase oryD would then convert oryzine B into oryzine A. This is Oryzines biosynthesis cluster protein J from Aspergillus oryzae (strain ATCC 42149 / RIB 40) (Yellow koji mold).